A 441-amino-acid polypeptide reads, in one-letter code: Putative F-box protein At1g33530 (441 aa).

The F-box domain occupies 91-137 (TTLAVELPDVLVEEILQRLPVKYLVRLKSISKGWKSLIESDHLAEKH).

The sequence is that of Putative F-box protein At1g33530 from Arabidopsis thaliana (Mouse-ear cress).